Here is a 432-residue protein sequence, read N- to C-terminus: Luc7-like protein 3 (432 aa).

An N-acetylmethionine modification is found at methionine 1. Residues serine 3, serine 110, and serine 115 each carry the phosphoserine modification. A coiled-coil region spans residues 124–181 (KNEEKIQVLTDKIDVLLQQIEELGSEGKVEEAQGMMKLVEQLKEERELLRSTTSTIES). N6-acetyllysine is present on lysine 231. Residues 234–287 (LRKRTEEPDRDERLKKEKQEREEREKEREREREERERKRRREEEEREKERARDR) are compositionally biased toward basic and acidic residues. The disordered stretch occupies residues 234 to 432 (LRKRTEEPDR…IKSEGDTQSN (199 aa)). Basic residues predominate over residues 288 to 301 (ERRKRSRSRSRHSS). Positions 302 to 311 (RTSDRRCSRS) are enriched in basic and acidic residues. Residues 312-367 (RDHKRSRSRERRRSRSRDRRRSRSHDRSERKHRSRSRDRRRSKSRDRKSYKHRSKS) are compositionally biased toward basic residues. A compositionally biased stretch (basic and acidic residues) spans 368–414 (RDREQDRKSKEKEKRGSDDKKSSVKSGSREKQSEDTNTESKESDTKN). Serine 420 carries the post-translational modification Phosphoserine. Residues 421-432 (EDIKSEGDTQSN) show a composition bias toward basic and acidic residues. A Glycyl lysine isopeptide (Lys-Gly) (interchain with G-Cter in SUMO1); alternate cross-link involves residue lysine 424. Residue lysine 424 forms a Glycyl lysine isopeptide (Lys-Gly) (interchain with G-Cter in SUMO2); alternate linkage. 2 positions are modified to phosphoserine: serine 425 and serine 431.

The protein belongs to the Luc7 family. In terms of assembly, may interact with SFRS1 and form homodimers. Interacts with JMJD6. Interacts with RBM25. Interacts with RSRC1 (via Arg/Ser-rich domain). Interacts with RRP1B. Post-translationally, phosphorylated in vitro by SRPK1, SRPK2 and CLK1. Widely expressed. Highest levels in heart, brain, pancreas, thymus, ovary, small intestine and peripheral blood leukocytes, as well as cerebellum, putamen and pituitary gland. Lowest levels in lung, liver and kidney. Also expressed in fetal tissues, including brain, heart, kidney, thymus and lung.

The protein resides in the nucleus speckle. Binds cAMP regulatory element DNA sequence. May play a role in RNA splicing. The chain is Luc7-like protein 3 (LUC7L3) from Homo sapiens (Human).